The following is a 275-amino-acid chain: Large ribosomal subunit protein uL2c (275 aa).

Disordered stretches follow at residues 1 to 28 and 227 to 251; these read MGIR…TKSK and PCDH…TPWG. A compositionally biased stretch (polar residues) spans 10–22; the sequence is TPGTRNRSSSDFS.

The protein belongs to the universal ribosomal protein uL2 family. As to quaternary structure, part of the 50S ribosomal subunit.

Its subcellular location is the plastid. It localises to the chloroplast. The protein is Large ribosomal subunit protein uL2c (rpl2) of Rhodomonas salina (Cryptomonas salina).